The sequence spans 223 residues: Putative 3-methyladenine DNA glycosylase (223 aa).

Belongs to the DNA glycosylase MPG family.

The protein is Putative 3-methyladenine DNA glycosylase of Pseudomonas savastanoi pv. phaseolicola (strain 1448A / Race 6) (Pseudomonas syringae pv. phaseolicola (strain 1448A / Race 6)).